The chain runs to 365 residues: Deoxyguanosinetriphosphate triphosphohydrolase-like protein (365 aa).

Residues 52–187 (RLTHSIEVSQ…VDHADEIAYV (136 aa)) enclose the HD domain.

Belongs to the dGTPase family. Type 2 subfamily.

This is Deoxyguanosinetriphosphate triphosphohydrolase-like protein from Wolinella succinogenes (strain ATCC 29543 / DSM 1740 / CCUG 13145 / JCM 31913 / LMG 7466 / NCTC 11488 / FDC 602W) (Vibrio succinogenes).